Reading from the N-terminus, the 119-residue chain is Large ribosomal subunit protein uL18 (119 aa).

Belongs to the universal ribosomal protein uL18 family. In terms of assembly, part of the 50S ribosomal subunit; part of the 5S rRNA/L5/L18/L25 subcomplex. Contacts the 5S and 23S rRNAs.

Its function is as follows. This is one of the proteins that bind and probably mediate the attachment of the 5S RNA into the large ribosomal subunit, where it forms part of the central protuberance. In Endomicrobium trichonymphae, this protein is Large ribosomal subunit protein uL18.